The chain runs to 365 residues: UDP-N-acetylglucosamine--N-acetylmuramyl-(pentapeptide) pyrophosphoryl-undecaprenol N-acetylglucosamine transferase (365 aa).

UDP-N-acetyl-alpha-D-glucosamine-binding positions include 10 to 12 (TGG), N128, R170, S199, I250, and Q295.

This sequence belongs to the glycosyltransferase 28 family. MurG subfamily.

The protein resides in the cell inner membrane. The enzyme catalyses di-trans,octa-cis-undecaprenyl diphospho-N-acetyl-alpha-D-muramoyl-L-alanyl-D-glutamyl-meso-2,6-diaminopimeloyl-D-alanyl-D-alanine + UDP-N-acetyl-alpha-D-glucosamine = di-trans,octa-cis-undecaprenyl diphospho-[N-acetyl-alpha-D-glucosaminyl-(1-&gt;4)]-N-acetyl-alpha-D-muramoyl-L-alanyl-D-glutamyl-meso-2,6-diaminopimeloyl-D-alanyl-D-alanine + UDP + H(+). The protein operates within cell wall biogenesis; peptidoglycan biosynthesis. Cell wall formation. Catalyzes the transfer of a GlcNAc subunit on undecaprenyl-pyrophosphoryl-MurNAc-pentapeptide (lipid intermediate I) to form undecaprenyl-pyrophosphoryl-MurNAc-(pentapeptide)GlcNAc (lipid intermediate II). The protein is UDP-N-acetylglucosamine--N-acetylmuramyl-(pentapeptide) pyrophosphoryl-undecaprenol N-acetylglucosamine transferase of Pelodictyon phaeoclathratiforme (strain DSM 5477 / BU-1).